Consider the following 93-residue polypeptide: Small ribosomal subunit protein uS17 (93 aa).

It belongs to the universal ribosomal protein uS17 family. As to quaternary structure, part of the 30S ribosomal subunit.

In terms of biological role, one of the primary rRNA binding proteins, it binds specifically to the 5'-end of 16S ribosomal RNA. The chain is Small ribosomal subunit protein uS17 from Corynebacterium aurimucosum (strain ATCC 700975 / DSM 44827 / CIP 107346 / CN-1) (Corynebacterium nigricans).